Consider the following 163-residue polypeptide: Probable phosphotransferase enzyme IIB component M6_Spy0801 (163 aa).

The PTS EIIB type-4 domain occupies 1–163 (MITQIRVDDR…TKVHLSQLVN (163 aa)). His-13 serves as the catalytic Pros-phosphohistidine intermediate.

Its subcellular location is the cytoplasm. In terms of biological role, the phosphoenolpyruvate-dependent sugar phosphotransferase system (sugar PTS), a major carbohydrate active -transport system, catalyzes the phosphorylation of incoming sugar substrates concomitantly with their translocation across the cell membrane. This is Probable phosphotransferase enzyme IIB component M6_Spy0801 from Streptococcus pyogenes serotype M6 (strain ATCC BAA-946 / MGAS10394).